The following is a 476-amino-acid chain: Transposase for transposon Tn5 (476 aa).

Positions 1–70 (MITSALHRAA…YRFIRNPNVS (70 aa)) are interaction with DNA. 2 residues coordinate Mg(2+): Asp-97 and Asp-188. 2 interaction with DNA regions span residues 237–255 (YQISIPQKGVVDKRGKRKN) and 319–348 (YTHRWRIEEFHKAWKTGAGAERQRMEEPDN). Residue Glu-326 coordinates Mg(2+). The segment at 369 to 476 (SFTLPQALRA…KDLMAQGIKI (108 aa)) is important for dimerization.

It belongs to the transposase 11 family. As to quaternary structure, monomer. Homodimer of tnp (isoform 1), and heterodimer of tnp (isoform 1) and inh (isoform 2). Mg(2+) serves as cofactor.

Its function is as follows. Mediates transposition of transposon Tn5 by a 'cut and paste' mechanism. First, the monomeric transposase binds the 19 bp inverted DNA repeats flanking the transposon. Then, dimerization of the DNA-bound transposase creates a synaptic DNA complex. After nicking of the first DNA strand, excision of the transposon proceeds through a series of intermediates. The transposase then mediates the insertion of the transposon at a new site by strand transfer. The activity of the wild-type transposase is very low, and is further inhibited by dimerization with the transposase inhibitor (inh). This Escherichia coli protein is Transposase for transposon Tn5 (tnpA).